The primary structure comprises 690 residues: Eukaryotic translation initiation factor 3 subunit B (690 aa).

Residues 1-11 (MAKKKSEEHSG) show a composition bias toward basic and acidic residues. The segment at 1-36 (MAKKKSEEHSGADANDSDYTEEPNFDDPPNFVDNIS) is disordered. Residues 15-25 (NDSDYTEEPNF) are compositionally biased toward acidic residues. The RRM domain maps to 57 to 141 (SVVVVDNMPK…YTFAVNLFTD (85 aa)). 5 WD repeats span residues 207-246 (TRER…KIQK), 292-331 (GDGM…LLDL), 334-369 (IKIP…TLME), 442-484 (EIRE…KPSL), and 530-575 (PDHF…IRRT). Residues 614–645 (QKDRLRLTRASKELLEKRSQLRETFMEYRNKR) adopt a coiled-coil conformation.

It belongs to the eIF-3 subunit B family. As to quaternary structure, component of the eukaryotic translation initiation factor 3 (eIF-3) complex. The eIF-3 complex interacts with pix. Interacts with mxt.

It localises to the cytoplasm. In terms of biological role, RNA-binding component of the eukaryotic translation initiation factor 3 (eIF-3) complex, which is involved in protein synthesis of a specialized repertoire of mRNAs and, together with other initiation factors, stimulates binding of mRNA and methionyl-tRNAi to the 40S ribosome. The eIF-3 complex specifically targets and initiates translation of a subset of mRNAs involved in cell proliferation. This is Eukaryotic translation initiation factor 3 subunit B from Drosophila virilis (Fruit fly).